A 373-amino-acid chain; its full sequence is tRNA-specific 2-thiouridylase MnmA (373 aa).

ATP is bound by residues 12–19 (GMSGGVDS) and Met-38. Positions 98–100 (NPD) are interaction with target base in tRNA. Cys-103 serves as the catalytic Nucleophile. Cysteines 103 and 200 form a disulfide. Gly-127 serves as a coordination point for ATP. Positions 150-152 (KDQ) are interaction with tRNA. Cys-200 acts as the Cysteine persulfide intermediate in catalysis. Residues 312-313 (RY) form an interaction with tRNA region.

Belongs to the MnmA/TRMU family.

The protein localises to the cytoplasm. The enzyme catalyses S-sulfanyl-L-cysteinyl-[protein] + uridine(34) in tRNA + AH2 + ATP = 2-thiouridine(34) in tRNA + L-cysteinyl-[protein] + A + AMP + diphosphate + H(+). Functionally, catalyzes the 2-thiolation of uridine at the wobble position (U34) of tRNA, leading to the formation of s(2)U34. The polypeptide is tRNA-specific 2-thiouridylase MnmA (Streptococcus pyogenes serotype M28 (strain MGAS6180)).